A 459-amino-acid chain; its full sequence is Argininosuccinate lyase (459 aa).

The protein belongs to the lyase 1 family. Argininosuccinate lyase subfamily.

Its subcellular location is the cytoplasm. It catalyses the reaction 2-(N(omega)-L-arginino)succinate = fumarate + L-arginine. Its pathway is amino-acid biosynthesis; L-arginine biosynthesis; L-arginine from L-ornithine and carbamoyl phosphate: step 3/3. This is Argininosuccinate lyase from Geobacillus sp. (strain WCH70).